The chain runs to 45 residues: Large ribosomal subunit protein bL34 (45 aa).

It belongs to the bacterial ribosomal protein bL34 family.

The protein is Large ribosomal subunit protein bL34 of Opitutus terrae (strain DSM 11246 / JCM 15787 / PB90-1).